The following is a 624-amino-acid chain: DNA-directed RNA polymerase III subunit rpc-3 (624 aa).

Disordered regions lie at residues 229 to 260 (KRKL…EEDL) and 373 to 418 (LAPK…ARMS). Positions 385–403 (DDSDDDEEDGDYSDSDEEM) are enriched in acidic residues. Positions 551–572 (CYATMVHCLQVLEVRRQKDKDV) are leucine-zipper.

The protein belongs to the RNA polymerase beta chain family. As to quaternary structure, component of the RNA polymerase III (Pol III) complex consisting of 17 subunits.

The protein resides in the nucleus. In terms of biological role, DNA-dependent RNA polymerase catalyzes the transcription of DNA into RNA using the four ribonucleoside triphosphates as substrates. Specific core component of RNA polymerase III which synthesizes small RNAs, such as 5S rRNA and tRNAs. The protein is DNA-directed RNA polymerase III subunit rpc-3 (rpc-82) of Neurospora crassa (strain ATCC 24698 / 74-OR23-1A / CBS 708.71 / DSM 1257 / FGSC 987).